We begin with the raw amino-acid sequence, 108 residues long: UPF0060 membrane protein sll0793 (108 aa).

4 helical membrane-spanning segments follow: residues Leu-7 to Ile-27, Ser-32 to Leu-52, Tyr-64 to Val-84, and Arg-86 to Asn-106.

This sequence belongs to the UPF0060 family.

It is found in the cell inner membrane. This is UPF0060 membrane protein sll0793 from Synechocystis sp. (strain ATCC 27184 / PCC 6803 / Kazusa).